Reading from the N-terminus, the 859-residue chain is Envelope glycoprotein (859 aa).

The propeptide occupies 1–6; the sequence is MVSIAF. At 7–614 the chain is on the extracellular side; it reads YGGIPGGIST…KDLWSHIGNW (608 aa). N-linked (GlcNAc...) asparagine; by host glycosylation is found at Asn40, Asn112, Asn141, Asn148, Asn184, Asn201, Asn214, Asn233, Asn244, Asn282, Asn313, Asn340, Asn346, Asn368, Asn399, Asn406, Asn411, and Asn422. The segment at 446-466 is fusion peptide; that stretch reads FGISAIVAAIVAATAIAASAT. Residues Asn483 and Asn490 are each glycosylated (N-linked (GlcNAc...) asparagine; by host). Residues 498 to 513 form an immunosuppression region; that stretch reads LIERQIKILYAMILQT. Residues Asn550 and Asn557 are each glycosylated (N-linked (GlcNAc...) asparagine; by host). 2 coiled-coil regions span residues 576-624 and 663-699; these read ILTI…SIIK and KKFY…YCKQ. A helical transmembrane segment spans residues 615–635; the sequence is IPGLGASIIKYIVMFLLIYLL. Residues 636–859 are Cytoplasmic-facing; it reads LTSSPKILRA…TSHVSMPQYV (224 aa).

The mature envelope protein (Env) consists of a trimer of SU-TM heterodimers attached by noncovalent interactions or by a labile interchain disulfide bond. Specific enzymatic cleavages in vivo yield mature proteins. Envelope glycoproteins are synthesized as an inactive precursor that is N-glycosylated and processed likely by host cell furin or by a furin-like protease in the Golgi to yield the mature SU and TM proteins. The cleavage site between SU and TM requires the minimal sequence [KR]-X-[KR]-R.

It localises to the virion membrane. It is found in the host cell membrane. Its function is as follows. The surface protein (SU) attaches the virus to the host cell by binding to its receptor. This interaction triggers the refolding of the transmembrane protein (TM) and is thought to activate its fusogenic potential by unmasking its fusion peptide. Fusion occurs at the host cell plasma membrane. The transmembrane protein (TM) acts as a class I viral fusion protein. Under the current model, the protein has at least 3 conformational states: pre-fusion native state, pre-hairpin intermediate state, and post-fusion hairpin state. During viral and target cell membrane fusion, the coiled coil regions (heptad repeats) assume a trimer-of-hairpins structure, positioning the fusion peptide in close proximity to the C-terminal region of the ectodomain. The formation of this structure appears to drive apposition and subsequent fusion of viral and target cell membranes. Membranes fusion leads to delivery of the nucleocapsid into the cytoplasm. The protein is Envelope glycoprotein (env) of Equus asinus (Donkey).